Reading from the N-terminus, the 758-residue chain is Xaa-Pro dipeptidyl-peptidase (758 aa).

Residues Ser-349, Asp-469, and His-499 each act as charge relay system in the active site.

This sequence belongs to the peptidase S15 family. Homodimer.

The protein localises to the cytoplasm. The enzyme catalyses Hydrolyzes Xaa-Pro-|- bonds to release unblocked, N-terminal dipeptides from substrates including Ala-Pro-|-p-nitroanilide and (sequentially) Tyr-Pro-|-Phe-Pro-|-Gly-Pro-|-Ile.. Its function is as follows. Removes N-terminal dipeptides sequentially from polypeptides having unsubstituted N-termini provided that the penultimate residue is proline. The polypeptide is Xaa-Pro dipeptidyl-peptidase (Streptococcus uberis (strain ATCC BAA-854 / 0140J)).